We begin with the raw amino-acid sequence, 109 residues long: Large ribosomal subunit protein bL31B (109 aa).

Residues 79–109 (NVRQPAQQPQPEEDALPAAKGKKKVVTKKKK) form a disordered region. Residues 98–109 (KGKKKVVTKKKK) show a composition bias toward basic residues.

It belongs to the bacterial ribosomal protein bL31 family. Type B subfamily. Part of the 50S ribosomal subunit.

The polypeptide is Large ribosomal subunit protein bL31B (Chlamydia pneumoniae (Chlamydophila pneumoniae)).